The primary structure comprises 36 residues: Esculentin-2R (36 aa).

Cysteine 30 and cysteine 36 are disulfide-bonded.

As to expression, expressed by the skin glands.

Its subcellular location is the secreted. Its function is as follows. Antimicrobial peptide. This is Esculentin-2R from Pelophylax ridibundus (Marsh frog).